The following is a 305-amino-acid chain: tRNA pseudouridine synthase B (305 aa).

The active-site Nucleophile is aspartate 38.

It belongs to the pseudouridine synthase TruB family. Type 1 subfamily.

It catalyses the reaction uridine(55) in tRNA = pseudouridine(55) in tRNA. Functionally, responsible for synthesis of pseudouridine from uracil-55 in the psi GC loop of transfer RNAs. The chain is tRNA pseudouridine synthase B from Latilactobacillus sakei subsp. sakei (strain 23K) (Lactobacillus sakei subsp. sakei).